We begin with the raw amino-acid sequence, 311 residues long: ADP-L-glycero-D-manno-heptose-6-epimerase (311 aa).

NADP(+) contacts are provided by residues 10–11, 31–32, lysine 38, lysine 53, 75–79, and asparagine 92; these read FI, DD, and EGACS. Residue tyrosine 139 is the Proton acceptor of the active site. Lysine 143 contacts NADP(+). Residue asparagine 174 participates in substrate binding. The NADP(+) site is built by valine 175 and lysine 183. Lysine 183 acts as the Proton acceptor in catalysis. Substrate contacts are provided by residues serine 185, histidine 192, 206–209, arginine 212, and tyrosine 275; that span reads FEGE.

Belongs to the NAD(P)-dependent epimerase/dehydratase family. HldD subfamily. In terms of assembly, homopentamer. NADP(+) is required as a cofactor.

The enzyme catalyses ADP-D-glycero-beta-D-manno-heptose = ADP-L-glycero-beta-D-manno-heptose. It functions in the pathway nucleotide-sugar biosynthesis; ADP-L-glycero-beta-D-manno-heptose biosynthesis; ADP-L-glycero-beta-D-manno-heptose from D-glycero-beta-D-manno-heptose 7-phosphate: step 4/4. Catalyzes the interconversion between ADP-D-glycero-beta-D-manno-heptose and ADP-L-glycero-beta-D-manno-heptose via an epimerization at carbon 6 of the heptose. In Psychromonas ingrahamii (strain DSM 17664 / CCUG 51855 / 37), this protein is ADP-L-glycero-D-manno-heptose-6-epimerase.